The following is a 961-amino-acid chain: Leucine--tRNA ligase (961 aa).

Residues 41–51 carry the 'HIGH' region motif; the sequence is PYLNGNLHAGH. The 'KMSKS' region motif lies at 632-636; that stretch reads KMSKS. Lysine 635 serves as a coordination point for ATP.

Belongs to the class-I aminoacyl-tRNA synthetase family.

The protein resides in the cytoplasm. It catalyses the reaction tRNA(Leu) + L-leucine + ATP = L-leucyl-tRNA(Leu) + AMP + diphosphate. The sequence is that of Leucine--tRNA ligase from Methanosarcina acetivorans (strain ATCC 35395 / DSM 2834 / JCM 12185 / C2A).